The chain runs to 189 residues: MPKTRRRPRRSQRKRPPTPWPTSQGLDRVFFSDTQSTCLETVYRATGAPSLGDYVRPVYIVTPYWPPVQSIRSPGTPSMDALSAQLYSSLSLDSPPSPPREPLRPSRSLPRRPPIQPPTFHPPSSRPCANTPPSETDTWNPPLGSTSQPCLFQTPASGPKTCTPSGEAPLSACTSTSFPPPSPGPSCPT.

The span at 1 to 16 shows a compositional bias: basic residues; it reads MPKTRRRPRRSQRKRP. Residues 1 to 28 are disordered; sequence MPKTRRRPRRSQRKRPPTPWPTSQGLDR. The Nuclear localization signal, and RNA-binding (RxRE) motif lies at 2-18; it reads PKTRRRPRRSQRKRPPT. A homomultimerization region spans residues 56–70; sequence RPVYIVTPYWPPVQS. Phosphoserine; by host is present on Ser70. The Nuclear export signal motif lies at 82-93; that stretch reads LSAQLYSSLSLD. The span at 84-94 shows a compositional bias: low complexity; the sequence is AQLYSSLSLDS. Positions 84–189 are disordered; sequence AQLYSSLSLD…PPSPGPSCPT (106 aa). Residues 111 to 125 are compositionally biased toward pro residues; that stretch reads RRPPIQPPTFHPPSS. The interval 123-131 is homomultimerization; sequence PSSRPCANT. The span at 127 to 164 shows a compositional bias: polar residues; sequence PCANTPPSETDTWNPPLGSTSQPCLFQTPASGPKTCTP. Thr174 is modified (phosphothreonine; by host). The residue at position 177 (Ser177) is a Phosphoserine; by host. Over residues 178-189 the composition is skewed to pro residues; it reads FPPPSPGPSCPT.

The protein belongs to the deltaretrovirus Rex protein family. As to quaternary structure, homomultimer. Multimeric assembly is essential for activity and involves XPO1. Binds to human XPO1 and KPNB1. Interacts (via N-terminal nuclear localization signal) with human NPM1. Post-translationally, phosphorylated.

It is found in the host nucleus. The protein resides in the host nucleolus. The protein localises to the host cytoplasm. Functionally, rex escorts unspliced gag-pro-pol and singly spliced env mRNAs out of the nucleus of infected cells. These mRNAs carry a recognition sequence called Rex responsive element (RxRE or XRE) located at the 3' region of the long terminal repeat (LTR). This function is essential since most HTLV proteins are translated from unspliced or partially spliced pre-mRNAs that cannot exit the nucleus by the pathway used by fully processed cellular mRNAs. Rex itself is translated from a fully spliced mRNA that probably readily exits the nucleus. Rex's nuclear localization signal (NLS) binds directly to KPNB1/importin beta-1 without previous binding to KPNA1/importin alpha-1. KPNB1 binds to the GDP bound form of RAN (Ran-GDP) and targets Rex to the nucleus. In the nucleus, the conversion from Ran-GDP to Ran-GTP dissociates Rex from KPNB1 and allows Rex's binding to the RRE in viral pre-mRNAs. Rex multimerizes on the RRE via cooperative assembly. This multimerization is critical for its full biological activity, since it may shield the viral RNA from being spliced or down-regulated, and probably exposes Rex's nuclear export signal (NES) to the surface. Rex can then form a complex with XPO1/CRM1, RANBP3 and Ran-GTP, leading to nuclear export of the complex. Conversion from Ran-GTP to Ran-GDP mediates dissociation of the Rex/RRE/XPO1/RANBP3/RAN complex, so that Rex can return to the nucleus for a subsequent round of export. This is Protein Rex from Homo sapiens (Human).